The chain runs to 417 residues: Glutamyl-tRNA reductase (417 aa).

Substrate contacts are provided by residues 49–52, serine 109, 114–116, and glutamine 120; these read TCNR and ESQ. The active-site Nucleophile is the cysteine 50. Residue 189-194 participates in NADP(+) binding; that stretch reads GLGEIG.

The protein belongs to the glutamyl-tRNA reductase family. Homodimer.

The enzyme catalyses (S)-4-amino-5-oxopentanoate + tRNA(Glu) + NADP(+) = L-glutamyl-tRNA(Glu) + NADPH + H(+). The protein operates within porphyrin-containing compound metabolism; protoporphyrin-IX biosynthesis; 5-aminolevulinate from L-glutamyl-tRNA(Glu): step 1/2. Its function is as follows. Catalyzes the NADPH-dependent reduction of glutamyl-tRNA(Glu) to glutamate 1-semialdehyde (GSA). The sequence is that of Glutamyl-tRNA reductase from Streptococcus sanguinis (strain SK36).